The chain runs to 84 residues: Large ribosomal subunit protein bL27 (84 aa).

Residues 1-22 form a disordered region; that stretch reads MAHKKAGGSTRNGRDSESKRLG.

Belongs to the bacterial ribosomal protein bL27 family.

This chain is Large ribosomal subunit protein bL27, found in Shewanella baltica (strain OS223).